The chain runs to 394 residues: Acetate kinase (394 aa).

Asn-10 serves as a coordination point for Mg(2+). Position 17 (Lys-17) interacts with ATP. Arg-87 lines the substrate pocket. The Proton donor/acceptor role is filled by Asp-144. ATP-binding positions include His-204–Gly-208, Asp-279–Arg-281, and Gly-327–Asn-331. Residue Glu-381 participates in Mg(2+) binding.

Belongs to the acetokinase family. Homodimer. The cofactor is Mg(2+). Requires Mn(2+) as cofactor.

The protein localises to the cytoplasm. It carries out the reaction acetate + ATP = acetyl phosphate + ADP. Its pathway is metabolic intermediate biosynthesis; acetyl-CoA biosynthesis; acetyl-CoA from acetate: step 1/2. Functionally, catalyzes the formation of acetyl phosphate from acetate and ATP. Can also catalyze the reverse reaction. This Pseudomonas aeruginosa (strain LESB58) protein is Acetate kinase.